We begin with the raw amino-acid sequence, 483 residues long: Argininosuccinate lyase (483 aa).

Belongs to the lyase 1 family. Argininosuccinate lyase subfamily.

The protein resides in the cytoplasm. The catalysed reaction is 2-(N(omega)-L-arginino)succinate = fumarate + L-arginine. Its pathway is amino-acid biosynthesis; L-arginine biosynthesis; L-arginine from L-ornithine and carbamoyl phosphate: step 3/3. The protein is Argininosuccinate lyase of Archaeoglobus fulgidus (strain ATCC 49558 / DSM 4304 / JCM 9628 / NBRC 100126 / VC-16).